The following is a 546-amino-acid chain: Major facilitator superfamily transporter MPN_077 (546 aa).

Helical transmembrane passes span 2 to 22, 62 to 82, 88 to 108, 179 to 199, 220 to 240, 248 to 268, 305 to 325, 344 to 364, 377 to 397, 401 to 421, 442 to 462, and 485 to 505; these read WGLV…IDFI, WTIT…VVKF, VMIM…GSPL, AFFI…IAYA, FWGF…PGVG, VWVV…FAWF, LLAI…QTWF, PILL…LSPF, FIFT…ATLG, VVGF…GWSL, IIFG…DIIT, and IAAI…IIYL.

This sequence belongs to the major facilitator superfamily.

It is found in the cell membrane. The polypeptide is Major facilitator superfamily transporter MPN_077 (Mycoplasma pneumoniae (strain ATCC 29342 / M129 / Subtype 1) (Mycoplasmoides pneumoniae)).